Here is an 882-residue protein sequence, read N- to C-terminus: Exo-beta-D-glucosaminidase ARB_07888 (882 aa).

An N-terminal signal peptide occupies residues 1–21 (MWFVFRPAAIPALLLTLGVSA). The propeptide occupies 22 to 31 (LSPLRPLVST). N-linked (GlcNAc...) asparagine glycans are attached at residues asparagine 86, asparagine 200, asparagine 234, asparagine 237, asparagine 287, and asparagine 442. The active-site Proton donor is aspartate 466. Glutamate 538 serves as the catalytic Nucleophile. N-linked (GlcNAc...) asparagine glycans are attached at residues asparagine 688, asparagine 773, and asparagine 816.

The protein belongs to the glycosyl hydrolase 2 family. Monomer.

The protein localises to the secreted. It carries out the reaction Hydrolysis of chitosan or chitosan oligosaccharides to remove successive D-glucosamine residues from the non-reducing termini.. Its function is as follows. Hydrolyzes chitosan and chitooligosaccharides with retention of anomeric configuration. The chain is Exo-beta-D-glucosaminidase ARB_07888 from Arthroderma benhamiae (strain ATCC MYA-4681 / CBS 112371) (Trichophyton mentagrophytes).